The following is a 217-amino-acid chain: Frataxin, mitochondrial (217 aa).

Residues 1–42 constitute a mitochondrion transit peptide; that stretch reads MWTLGRRSVASFLPRSALPGFAPTRAGAPRPAKDLSLSGLPG.

Belongs to the frataxin family. As to quaternary structure, component of the mitochondrial core iron-sulfur cluster (ISC) complex composed of NFS1, LYRM4, NDUFAB1, ISCU, FXN, and FDX2; this complex is a heterohexamer containing two copies of each monomer. Homodimer. Monomer (probable predominant form). Oligomer. Monomers and polymeric aggregates of &gt;1 MDa have been isolated from mitochondria. A small fraction of heterologous overexpressed recombinant frataxin forms high-molecular weight aggregates that incorporate iron. Interacts with LYRM4. Interacts (via ferrous form) with ISCU; the interaction is possible when both are bound to the dimeric form of the cysteine desulfurase complex (NFS1:LYRM4) and the interaction enhances FXN interaction to the dimeric form of the cysteine desulfurase complex (NFS1:LYRM4). Interacts with FECH; one iron-bound FXN monomer seems to interact with a FECH homodimer. Interacts with SDHA and SDHB. Interacts with ACO2; the interaction is dependent on citrate. Interacts with HSPA9. In terms of assembly, interacts with ACO1. Interacts with ISCU (cytoplasmic form). Processed in two steps by mitochondrial processing peptidase (MPP). MPP first cleaves the precursor to intermediate form and subsequently converts the intermediate to yield frataxin mature form (frataxin(81-210)) which is the predominant form. The additional forms, frataxin(56-210) and frataxin(78-210), seem to be produced when the normal maturation process is impaired; their physiological relevance is unsure.

The protein localises to the mitochondrion. The protein resides in the cytoplasm. Its subcellular location is the cytosol. The catalysed reaction is 4 Fe(2+) + O2 + 4 H(+) = 4 Fe(3+) + 2 H2O. Its function is as follows. Functions as an activator of persulfide transfer to the scaffoding protein ISCU as component of the core iron-sulfur cluster (ISC) assembly complex and participates to the [2Fe-2S] cluster assembly. Accelerates sulfur transfer from NFS1 persulfide intermediate to ISCU and to small thiols such as L-cysteine and glutathione leading to persulfuration of these thiols and ultimately sulfide release. Binds ferrous ion and is released from FXN upon the addition of both L-cysteine and reduced FDX2 during [2Fe-2S] cluster assembly. The core iron-sulfur cluster (ISC) assembly complex is involved in the de novo synthesis of a [2Fe-2S] cluster, the first step of the mitochondrial iron-sulfur protein biogenesis. This process is initiated by the cysteine desulfurase complex (NFS1:LYRM4:NDUFAB1) that produces persulfide which is delivered on the scaffold protein ISCU in a FXN-dependent manner. Then this complex is stabilized by FDX2 which provides reducing equivalents to accomplish the [2Fe-2S] cluster assembly. Finally, the [2Fe-2S] cluster is transferred from ISCU to chaperone proteins, including HSCB, HSPA9 and GLRX5. May play a role in the protection against iron-catalyzed oxidative stress through its ability to catalyze the oxidation of Fe(2+) to Fe(3+); the oligomeric form but not the monomeric form has in vitro ferroxidase activity. May be able to store large amounts of iron in the form of a ferrihydrite mineral by oligomerization; however, the physiological relevance is unsure as reports are conflicting and the function has only been shown using heterologous overexpression systems. May function as an iron chaperone protein that protects the aconitase [4Fe-4S]2+ cluster from disassembly and promotes enzyme reactivation. May play a role as a high affinity iron binding partner for FECH that is capable of both delivering iron to ferrochelatase and mediating the terminal step in mitochondrial heme biosynthesis. In terms of biological role, modulates the RNA-binding activity of ACO1. May be involved in the cytoplasmic iron-sulfur protein biogenesis. May contribute to oxidative stress resistance and overall cell survival. This Bos taurus (Bovine) protein is Frataxin, mitochondrial.